Consider the following 466-residue polypeptide: Collagenase 3 (466 aa).

Residues 1–13 (ATFFLLSWTHCWS) form the signal peptide. Residues 14 to 98 (LPLPYGDDDD…PRCGVPDVGV (85 aa)) constitute a propeptide, activation peptide. Positions 89–96 (PRCGVPDV) match the Cysteine switch motif. A Zn(2+)-binding site is contributed by cysteine 91. Asparagine 112 is a glycosylation site (N-linked (GlcNAc...) asparagine). A Ca(2+)-binding site is contributed by aspartate 123. Asparagine 147 carries an N-linked (GlcNAc...) asparagine glycan. Aspartate 157 is a Ca(2+) binding site. Zn(2+) contacts are provided by histidine 167 and aspartate 169. Positions 171–241 (YPFDGPSGLL…GALMFPIYTY (71 aa)) are interaction with TIMP2. Residues aspartate 174, glycine 175, serine 177, and leucine 179 each coordinate Ca(2+). Residue histidine 182 coordinates Zn(2+). Ca(2+) contacts are provided by asparagine 189, glycine 191, and aspartate 193. Histidine 195 contacts Zn(2+). Residues aspartate 197, aspartate 198, and glutamate 200 each contribute to the Ca(2+) site. Position 217 (histidine 217) interacts with Zn(2+). Glutamate 218 is a catalytic residue. 3 residues coordinate Zn(2+): histidine 221, histidine 227, and methionine 235. Residues 258–279 (QSLYGPGDEDPNPKHPKTPEKC) form a disordered region. Positions 263–466 (PGDEDPNPKH…VMPTNSLLWC (204 aa)) are interaction with collagen. A compositionally biased stretch (basic and acidic residues) spans 268–279 (PNPKHPKTPEKC). Hemopexin repeat units follow at residues 276–325 (PEKC…WPEL), 326–372 (PNHV…GFPK), 374–422 (VKRL…FPGI), and 423–466 (GDKV…LLWC). Cysteines 279 and 466 form a disulfide. Ca(2+) contacts are provided by aspartate 286, isoleucine 288, aspartate 330, and alanine 332. Position 361 is a phosphotyrosine; by PKDCC (tyrosine 361). 2 residues coordinate Ca(2+): serine 378 and alanine 380. N-linked (GlcNAc...) asparagine glycosylation occurs at asparagine 404. 2 residues coordinate Ca(2+): aspartate 427 and valine 429.

The protein belongs to the peptidase M10A family. Ca(2+) is required as a cofactor. Zn(2+) serves as cofactor. In terms of processing, the proenzyme is activated by removal of the propeptide; this cleavage can be effected by other matrix metalloproteinases, such as MMP2, MMP3 and MMP14 and may involve several cleavage steps. Cleavage can also be autocatalytic, after partial maturation by another protease or after treatment with 4-aminophenylmercuric acetate (APMA) (in vitro). Post-translationally, N-glycosylated. Tyrosine phosphorylated by PKDCC/VLK.

The protein resides in the secreted. It localises to the extracellular space. Its subcellular location is the extracellular matrix. Plays a role in the degradation of extracellular matrix proteins including fibrillar collagen, fibronectin, TNC and ACAN. Cleaves triple helical collagens, including type I, type II and type III collagen, but has the highest activity with soluble type II collagen. Can also degrade collagen type IV, type XIV and type X. May also function by activating or degrading key regulatory proteins, such as TGFB1 and CCN2. Plays a role in wound healing, tissue remodeling, cartilage degradation, bone development, bone mineralization and ossification. Required for normal embryonic bone development and ossification. Plays a role in the healing of bone fractures via endochondral ossification. Plays a role in wound healing, probably by a mechanism that involves proteolytic activation of TGFB1 and degradation of CCN2. Plays a role in keratinocyte migration during wound healing. May play a role in cell migration and in tumor cell invasion. This Rattus norvegicus (Rat) protein is Collagenase 3 (Mmp13).